Consider the following 154-residue polypeptide: CS6 fimbrial subunit A (154 aa).

The signal sequence occupies residues 1–18 (MKKTIGLILILASFGSHA).

It localises to the fimbrium. Functionally, fimbriae (also called pili), polar filaments radiating from the surface of the bacterium to a length of 0.5-1.5 micrometers and numbering 100-300 per cell, enable bacteria to colonize the epithelium of specific host organs. In Escherichia coli, this protein is CS6 fimbrial subunit A (cssA).